We begin with the raw amino-acid sequence, 520 residues long: Cytochrome P450 monooxygenase oblB (520 aa).

3 consecutive transmembrane segments (helical) span residues 17 to 37, 229 to 249, and 320 to 340; these read VAVI…RLFL, LFMG…SILA, and IGTG…HIVV. Cysteine 462 contacts heme.

Belongs to the cytochrome P450 family. It depends on heme as a cofactor.

The protein localises to the membrane. It functions in the pathway secondary metabolite biosynthesis; terpenoid biosynthesis. Its function is as follows. Cytochrome P450 monooxygenase; part of the gene cluster that mediates the biosynthesis of the sesterterpenes ophiobolins, fungal phytotoxins with potential anti-cancer activities. The first step of the pathway is performed by the sesterterpene synthase oblA that possesses both prenyl transferase and terpene cyclase activity, converting isopentenyl diphosphate and dimethylallyl diphosphate into geranylfarnesyl diphosphate (GFPP) and further converting GFPP into ophiobolin F, respectively. Other sesterterpenoids (C(25) terpenoids) are found as minor products of oblA. It is expected that ophiobolin F is then oxidized to ophiobolin A via ophiobolin C and ophiobolin B intermediates by the combined action of the cytochrome P450 monooxygenase oblB and the FAD-dependent oxidoreductase oblC. Although oblB catalyzes multistep oxygenations at C5 and C21/C7 in a relatively efficient manner, it is unable to convert ophiobolin F to ophiobolin C and produces instead several unexpected derivatives. This Aspergillus clavatus (strain ATCC 1007 / CBS 513.65 / DSM 816 / NCTC 3887 / NRRL 1 / QM 1276 / 107) protein is Cytochrome P450 monooxygenase oblB.